The following is a 187-amino-acid chain: Acireductone dioxygenase (187 aa).

Residues His87, His89, Glu93, and His136 each coordinate Fe(2+). Ni(2+) is bound by residues His87, His89, Glu93, and His136.

This sequence belongs to the acireductone dioxygenase (ARD) family. Requires Fe(2+) as cofactor. The cofactor is Ni(2+).

The protein localises to the cytoplasm. The protein resides in the nucleus. It carries out the reaction 1,2-dihydroxy-5-(methylsulfanyl)pent-1-en-3-one + O2 = 4-methylsulfanyl-2-oxobutanoate + formate + 2 H(+). The enzyme catalyses 1,2-dihydroxy-5-(methylsulfanyl)pent-1-en-3-one + O2 = 3-(methylsulfanyl)propanoate + CO + formate + 2 H(+). The protein operates within amino-acid biosynthesis; L-methionine biosynthesis via salvage pathway; L-methionine from S-methyl-5-thio-alpha-D-ribose 1-phosphate: step 5/6. Catalyzes 2 different reactions between oxygen and the acireductone 1,2-dihydroxy-3-keto-5-methylthiopentene (DHK-MTPene) depending upon the metal bound in the active site. Fe-containing acireductone dioxygenase (Fe-ARD) produces formate and 2-keto-4-methylthiobutyrate (KMTB), the alpha-ketoacid precursor of methionine in the methionine recycle pathway. Ni-containing acireductone dioxygenase (Ni-ARD) produces methylthiopropionate, carbon monoxide and formate, and does not lie on the methionine recycle pathway. This chain is Acireductone dioxygenase, found in Cryptococcus neoformans var. neoformans serotype D (strain JEC21 / ATCC MYA-565) (Filobasidiella neoformans).